Consider the following 502-residue polypeptide: Maturase K (502 aa).

This sequence belongs to the intron maturase 2 family. MatK subfamily.

Its subcellular location is the plastid. It is found in the chloroplast. Functionally, usually encoded in the trnK tRNA gene intron. Probably assists in splicing its own and other chloroplast group II introns. The sequence is that of Maturase K from Stanleya pinnata (Prince's plume).